Reading from the N-terminus, the 615-residue chain is Forkhead box protein O (615 aa).

Disordered stretches follow at residues 39-77 (RARSNTWPCPRPENFVEPTDELDSTKASNQQLAPGDSQQ), 182-205 (KSVRRRAASMETSRYEKRRGRAKK), 217-269 (GLND…RLSP), 318-359 (FSAA…APGY), and 389-409 (NSVTTTMSPAYPNSEPSSDSL). Thr44 carries the post-translational modification Phosphothreonine; by PKB/AKT1. A compositionally biased stretch (polar residues) spans 63–77 (TKASNQQLAPGDSQQ). Residue Ser75 is modified to Phosphoserine. Residues 95-201 (WGNLSYADLI…ETSRYEKRRG (107 aa)) constitute a DNA-binding region (fork-head). Position 190 is a phosphoserine; by PKB/AKT1 (Ser190). Composition is skewed to polar residues over residues 221-230 (ATPSPSSSVS) and 256-265 (RASSNASSCG). Residue Ser259 is modified to Phosphoserine; by PKB/AKT1. Phosphoserine occurs at positions 262, 263, and 268. A compositionally biased stretch (pro residues) spans 326-335 (SQPPPPPYQP). Residues 336–351 (PQHQQAQQQQQQSPYA) show a composition bias toward low complexity.

Interacts with melt.

It is found in the cytoplasm. Its subcellular location is the nucleus. Transcription factor involved in the regulation of the insulin signaling pathway. Consistently activates both the downstream target Thor\d4EBP and the feedback control target InR. Involved in negative regulation of the cell cycle, modulating cell growth and proliferation. In response to cellular stresses, such as nutrient deprivation or increased levels of reactive oxygen species, foxo is activated and inhibits growth through the action of target genes such as Thor. Foxo activated in the adult fat body can regulate lifespan in adults; an insulin peptide itself may function as one secondary messenger of insulin-regulated aging. Also regulates Lip4, homolog of human acid lipases, thereby acting as a key modulator of lipid metabolism by insulin signaling and integrates insulin responses to glucose and lipid homeostasis. This is Forkhead box protein O from Drosophila erecta (Fruit fly).